The following is a 1512-amino-acid chain: DNA (cytosine-5)-methyltransferase 2 (1512 aa).

Residues 1 to 22 (METKVGKQKKRSVDSNDDVSKE) are compositionally biased toward basic and acidic residues. 2 disordered regions span residues 1-35 (METK…RNFK) and 634-678 (AIHE…GNSE). The span at 638 to 662 (VEEEEIEEDEEEDENEEDDIEEEAV) shows a compositional bias: acidic residues. 2 consecutive BAH domains span residues 707-841 (ETVA…FSLP) and 909-1026 (TTLK…KQFP). The SAM-dependent MTase C5-type domain maps to 1071-1505 (LATLDIFAGC…RKLKEALYLK (435 aa)). Cysteine 1176 is an active-site residue.

It belongs to the class I-like SAM-binding methyltransferase superfamily. C5-methyltransferase family. Expressed at low levels in vegetative and floral organs.

Its subcellular location is the nucleus. The catalysed reaction is a 2'-deoxycytidine in DNA + S-adenosyl-L-methionine = a 5-methyl-2'-deoxycytidine in DNA + S-adenosyl-L-homocysteine + H(+). Maintains chromatin CpG methylation that plays a role in genomic imprinting, regulation of embryogenesis and seed viability. Required for proper patterns of CG DNA methylation in dividing cells. In Arabidopsis thaliana (Mouse-ear cress), this protein is DNA (cytosine-5)-methyltransferase 2 (MET2).